Here is a 635-residue protein sequence, read N- to C-terminus: Multiple inositol polyphosphate phosphatase 1 (635 aa).

Residues 1-23 (MMVKIKNIIILFCIFGLLSNVSS) form the signal peptide. The Extracellular segment spans residues 24–565 (LSSSSSSSQS…GNDSHSKKSS (542 aa)). The tract at residues 66–102 (KNGDSNSQGDGSSGNSNSNSNSNSNSNSNSDSSNEPP) is disordered. Positions 67 to 99 (NGDSNSQGDGSSGNSNSNSNSNSNSNSNSDSSN) are enriched in low complexity. The active site involves His-116. Over residues 380–421 (SSSSSSSSSSNNGDNSGSNGSSGSGSSTSTSSNDNGSTNNND) the composition is skewed to low complexity. The disordered stretch occupies residues 380 to 425 (SSSSSSSSSSNNGDNSGSNGSSGSGSSTSTSSNDNGSTNNNDNKVE). The chain crosses the membrane as a helical span at residues 566 to 586 (YFLAIFIPITFLVGGTIGGIF). The Cytoplasmic segment spans residues 587–635 (TYFSYEKIMQVKNRKKLTQYGNDEFISSPKSKSFSFKPTKFDSRSPLIQ). A compositionally biased stretch (low complexity) spans 614-624 (SPKSKSFSFKP). Positions 614-635 (SPKSKSFSFKPTKFDSRSPLIQ) are disordered.

It belongs to the histidine acid phosphatase family. MINPP1 subfamily.

The protein localises to the membrane. The catalysed reaction is 1D-myo-inositol hexakisphosphate + H2O = 1D-myo-inositol 1,2,4,5,6-pentakisphosphate + phosphate. It carries out the reaction 1D-myo-inositol 1,2,4,5,6-pentakisphosphate + H2O = 1D-myo-inositol 1,2,5,6-tetrakisphosphate + phosphate. It catalyses the reaction 1D-myo-inositol 1,2,5,6-tetrakisphosphate + H2O = 1D-myo-inositol 1,2,6-trisphosphate + phosphate. The enzyme catalyses 1D-myo-inositol 1,2,6-trisphosphate + H2O = 1D-myo-inositol 1,2-bisphosphate + phosphate. The catalysed reaction is 1D-myo-inositol 1,2-bisphosphate + H2O = 1D-myo-inositol 2-phosphate + phosphate. It carries out the reaction (2R)-2,3-bisphosphoglycerate + H2O = (2R)-2-phosphoglycerate + phosphate. Functionally, probable multiple inositol polyphosphate phosphatase that hydrolyzes 1D-myo-inositol 1,3,4,5,6-pentakisphosphate (InsP5[2OH]) and 1D-myo-inositol hexakisphosphate (InsP6) to a range of less phosphorylated inositol phosphates. This regulates the availability of these various small molecule second messengers and metal chelators which control many aspects of cell physiology. May have a dual substrate specificity, and function as a 2,3-bisphosphoglycerate 3-phosphatase hydrolyzing 2,3-bisphosphoglycerate to 2-phosphoglycerate. 2,3-bisphosphoglycerate (BPG) is formed as part of the Rapoport-Luebering glycolytic bypass. The protein is Multiple inositol polyphosphate phosphatase 1 (mipp1) of Dictyostelium discoideum (Social amoeba).